We begin with the raw amino-acid sequence, 265 residues long: Protein Rv2993c (265 aa).

Positions 114, 116, and 145 each coordinate a divalent metal cation.

The protein in the C-terminal section; belongs to the FAH family. Requires a divalent metal cation as cofactor.

The sequence is that of Protein Rv2993c from Mycobacterium tuberculosis (strain ATCC 25618 / H37Rv).